A 141-amino-acid polypeptide reads, in one-letter code: Histone H2B (141 aa).

The segment covering 1-10 (MPPKAAEKKP) has biased composition (basic and acidic residues). A disordered region spans residues 1–49 (MPPKAAEKKPSTGGKAPAGGKAPAEKKEAGKKTAAAASGDKKKRGKTRK). Residues K8 and K9 each carry the N6-acetyllysine; alternate modification. Glycyl lysine isopeptide (Lys-Gly) (interchain with G-Cter in SUMO); alternate cross-links involve residues K8 and K9. The segment covering 11-22 (STGGKAPAGGKA) has biased composition (low complexity). An N6-acetyllysine modification is found at K15. N6-acetyllysine; alternate is present on K26. A Glycyl lysine isopeptide (Lys-Gly) (interchain with G-Cter in SUMO); alternate cross-link involves residue K26. K27 participates in a covalent cross-link: Glycyl lysine isopeptide (Lys-Gly) (interchain with G-Cter in SUMO). Residue K135 forms a Glycyl lysine isopeptide (Lys-Gly) (interchain with G-Cter in ubiquitin) linkage.

The protein belongs to the histone H2B family. As to quaternary structure, the nucleosome is a histone octamer containing two molecules each of H2A, H2B, H3 and H4 assembled in one H3-H4 heterotetramer and two H2A-H2B heterodimers. The octamer wraps approximately 147 bp of DNA. Monoubiquitinated by the ubc2-bre1 complex to form H2BK123ub1. H2BK123ub1 gives a specific tag for epigenetic transcriptional activation and is also prerequisite for H3K4me and H3K79me formation. H2BK123ub1 also modulates the formation of double-strand breaks during meiosis and is a prerequisite for DNA-damage checkpoint activation. In terms of processing, acetylated by gcn5 to form H2BK11ac and H2BK16ac. H2BK16ac can also be formed by esa1. Acetylation of N-terminal lysines and particularly formation of H2BK11acK16ac has a positive effect on transcription. Post-translationally, sumoylation to form H2BK6su or H2BK7su, and probably also H2BK16su or H2BK17su, occurs preferentially near the telomeres and represses gene transcription.

It localises to the nucleus. The protein localises to the chromosome. Core component of nucleosome. Nucleosomes wrap and compact DNA into chromatin, limiting DNA accessibility to the cellular machineries which require DNA as a template. Histones thereby play a central role in transcription regulation, DNA repair, DNA replication and chromosomal stability. DNA accessibility is regulated via a complex set of post-translational modifications of histones, also called histone code, and nucleosome remodeling. The polypeptide is Histone H2B (htb1) (Aspergillus niger (strain ATCC MYA-4892 / CBS 513.88 / FGSC A1513)).